A 56-amino-acid polypeptide reads, in one-letter code: Large ribosomal subunit protein bL32 (56 aa).

The interval 1–29 (MAVQQNKPSRSKRGMRRSHDALTTSSVSV) is disordered.

This sequence belongs to the bacterial ribosomal protein bL32 family.

The polypeptide is Large ribosomal subunit protein bL32 (Pectobacterium atrosepticum (strain SCRI 1043 / ATCC BAA-672) (Erwinia carotovora subsp. atroseptica)).